Consider the following 302-residue polypeptide: Glycine--tRNA ligase alpha subunit (302 aa).

The protein belongs to the class-II aminoacyl-tRNA synthetase family. In terms of assembly, tetramer of two alpha and two beta subunits.

The protein localises to the cytoplasm. The catalysed reaction is tRNA(Gly) + glycine + ATP = glycyl-tRNA(Gly) + AMP + diphosphate. The polypeptide is Glycine--tRNA ligase alpha subunit (Baumannia cicadellinicola subsp. Homalodisca coagulata).